Reading from the N-terminus, the 330-residue chain is Bifunctional pinoresinol-lariciresinol reductase 2 (330 aa).

NADP(+) contacts are provided by residues 28 to 34 (GGTGYLG), arginine 53, and lysine 62. Lysine 156 functions as the Proton acceptor in the catalytic mechanism. Arginine 160 contacts NADP(+). Histidine 288 is a substrate binding site.

The protein belongs to the NmrA-type oxidoreductase family. Isoflavone reductase subfamily. Dimer. In terms of tissue distribution, expressed in leaves, stems, leaves and seeds.

It catalyses the reaction (+)-lariciresinol + NADP(+) = (+)-pinoresinol + NADPH + H(+). It carries out the reaction (-)-secoisolariciresinol + NADP(+) = (+)-lariciresinol + NADPH + H(+). In terms of biological role, reductase involved in lignan biosynthesis. Catalyzes the enantioselective conversion of (+)-pinoresinol into (+)-lariciresinol and of (+)-lariciresinol into (-)-secoisolariciresinol. Abstracts the 4R-hydride from the NADPH cofactor during catalysis. The sequence is that of Bifunctional pinoresinol-lariciresinol reductase 2 (PLR_Lu2) from Linum usitatissimum (Flax).